Here is a 235-residue protein sequence, read N- to C-terminus: Carboxy-S-adenosyl-L-methionine synthase (235 aa).

Residues Tyr35, 60–62 (GCS), 83–84 (DN), Asn124, and Arg191 each bind S-adenosyl-L-methionine.

The protein belongs to the class I-like SAM-binding methyltransferase superfamily. Cx-SAM synthase family. Homodimer.

It carries out the reaction prephenate + S-adenosyl-L-methionine = carboxy-S-adenosyl-L-methionine + 3-phenylpyruvate + H2O. Functionally, catalyzes the conversion of S-adenosyl-L-methionine (SAM) to carboxy-S-adenosyl-L-methionine (Cx-SAM). The protein is Carboxy-S-adenosyl-L-methionine synthase of Campylobacter jejuni subsp. doylei (strain ATCC BAA-1458 / RM4099 / 269.97).